A 187-amino-acid polypeptide reads, in one-letter code: Flavin prenyltransferase UbiX (187 aa).

FMN contacts are provided by residues 9–11 (GAS), serine 34, and arginine 123. 2 residues coordinate dimethylallyl phosphate: tyrosine 153 and lysine 169.

Belongs to the UbiX/PAD1 family.

The enzyme catalyses dimethylallyl phosphate + FMNH2 = prenylated FMNH2 + phosphate. Flavin prenyltransferase that catalyzes the synthesis of the prenylated FMN cofactor (prenyl-FMN) for 4-hydroxy-3-polyprenylbenzoic acid decarboxylase UbiD. The prenyltransferase is metal-independent and links a dimethylallyl moiety from dimethylallyl monophosphate (DMAP) to the flavin N5 and C6 atoms of FMN. The chain is Flavin prenyltransferase UbiX from Helicobacter pylori (strain J99 / ATCC 700824) (Campylobacter pylori J99).